Consider the following 34-residue polypeptide: MSDIN-like toxin proprotein 4 (34 aa).

Residues 1–10 (MSDINTARLP) constitute a propeptide that is removed on maturation. Positions 11–20 (LFLPPVRMPP) form a cross-link, cyclopeptide (Leu-Pro). The propeptide occupies 21 to 34 (CVGDDIEMVLTRGE).

This sequence belongs to the MSDIN fungal toxin family. In terms of processing, processed by the macrocyclase-peptidase enzyme POPB to yield a toxic cyclic decapeptide. POPB first removes 10 residues from the N-terminus. Conformational trapping of the remaining peptide forces the enzyme to release this intermediate rather than proceed to macrocyclization. The enzyme rebinds the remaining peptide in a different conformation and catalyzes macrocyclization of the N-terminal 10 residues.

Functionally, probable toxin that belongs to the MSDIN-like toxin family responsible for a large number of food poisoning cases and deaths. This Amanita bisporigera (Destroying angel) protein is MSDIN-like toxin proprotein 4.